Consider the following 117-residue polypeptide: Phosphoribosyl-ATP pyrophosphatase (117 aa).

The protein belongs to the PRA-PH family.

It is found in the cytoplasm. The enzyme catalyses 1-(5-phospho-beta-D-ribosyl)-ATP + H2O = 1-(5-phospho-beta-D-ribosyl)-5'-AMP + diphosphate + H(+). Its pathway is amino-acid biosynthesis; L-histidine biosynthesis; L-histidine from 5-phospho-alpha-D-ribose 1-diphosphate: step 2/9. This Rhodospirillum rubrum (strain ATCC 11170 / ATH 1.1.1 / DSM 467 / LMG 4362 / NCIMB 8255 / S1) protein is Phosphoribosyl-ATP pyrophosphatase.